Here is a 323-residue protein sequence, read N- to C-terminus: tRNA N6-adenosine threonylcarbamoyltransferase (323 aa).

Residues His106, His110, and Tyr127 each coordinate Fe cation. Substrate is bound by residues 127 to 131 (YVSGA), Asp159, Gly172, Glu176, and Asn255. Asp283 provides a ligand contact to Fe cation.

Belongs to the KAE1 / TsaD family. Monomer. Component of the KEOPS complex that consists of Kae1, Bud32, Cgi121 and Pcc1; the whole complex dimerizes. Fe(2+) serves as cofactor.

The protein localises to the cytoplasm. The catalysed reaction is L-threonylcarbamoyladenylate + adenosine(37) in tRNA = N(6)-L-threonylcarbamoyladenosine(37) in tRNA + AMP + H(+). Its function is as follows. Required for the formation of a threonylcarbamoyl group on adenosine at position 37 (t(6)A37) in tRNAs that read codons beginning with adenine. Is a component of the KEOPS complex that is probably involved in the transfer of the threonylcarbamoyl moiety of threonylcarbamoyl-AMP (TC-AMP) to the N6 group of A37. Kae1 likely plays a direct catalytic role in this reaction, but requires other protein(s) of the complex to fulfill this activity. The polypeptide is tRNA N6-adenosine threonylcarbamoyltransferase (Methanocella arvoryzae (strain DSM 22066 / NBRC 105507 / MRE50)).